Here is a 161-residue protein sequence, read N- to C-terminus: Putative pre-16S rRNA nuclease (161 aa).

It belongs to the YqgF nuclease family.

The protein localises to the cytoplasm. In terms of biological role, could be a nuclease involved in processing of the 5'-end of pre-16S rRNA. This Bartonella bacilliformis (strain ATCC 35685 / KC583 / Herrer 020/F12,63) protein is Putative pre-16S rRNA nuclease.